The primary structure comprises 1766 residues: E3 ubiquitin-protein ligase listerin (1766 aa).

Basic residues predominate over residues 1–11 (MGGKNKQRTKG). A disordered region spans residues 1–20 (MGGKNKQRTKGNVRPSSSGR). HEAT repeat units lie at residues 100 to 138 (KGVL…KVKK), 193 to 231 (VLQD…SLLA), 292 to 329 (AEAP…TIED), 335 to 372 (NARK…KVPP), and 512 to 549 (EKTL…DEDE). The tract at residues 529 to 567 (KTATKPNNRKSLKVKFSDEDESERNTENGKITEVRSNSD) is disordered. The segment covering 551–566 (ERNTENGKITEVRSNS) has biased composition (basic and acidic residues). HEAT repeat units follow at residues 606–644 (EQHL…ESQE), 672–710 (KDMH…KWIV), 916–953 (QVLI…NRTE), 1184–1227 (HLLP…MIRY), 1314–1355 (GIHN…YISK), and 1406–1447 (SKLM…TQEL). The RING-type zinc-finger motif lies at 1715–1762 (CMICFSVIHGSNYSLPKKACRTCKKKFHSACLYKWFTSSNKSTCPLCR).

This sequence belongs to the LTN1 family. Component of the ribosome quality control complex (RQC), composed of at least the E3 ubiquitin ligase LTN1 and NEMF associated with the 60S ribosomal subunit. The complex probably also contains TCF25 as well as VCP/p97 and its ubiquitin-binding cofactors.

The protein localises to the cytoplasm. Its subcellular location is the cytosol. It catalyses the reaction S-ubiquitinyl-[E2 ubiquitin-conjugating enzyme]-L-cysteine + [acceptor protein]-L-lysine = [E2 ubiquitin-conjugating enzyme]-L-cysteine + N(6)-ubiquitinyl-[acceptor protein]-L-lysine.. It participates in protein modification; protein ubiquitination. Its function is as follows. E3 ubiquitin-protein ligase component of the ribosome quality control complex (RQC), a ribosome-associated complex that mediates ubiquitination and extraction of incompletely synthesized nascent chains for proteasomal degradation. Within the RQC complex, LTN1 is recruited to stalled 60S ribosomal subunits by NEMF and mediates ubiquitination of stalled nascent chains. Ubiquitination leads to VCP/p97 recruitment for extraction and degradation of the incomplete translation product. The protein is E3 ubiquitin-protein ligase listerin (LTN1) of Gallus gallus (Chicken).